Here is a 342-residue protein sequence, read N- to C-terminus: Zinc transporter ZIP11 (342 aa).

7 helical membrane passes run 12-32 (LLGT…VFIF), 44-64 (LGFA…APAV), 72-92 (GFGA…AAFV), 194-214 (IALL…AVGV), 263-285 (FWYG…FAVV), 290-307 (ILPY…YVVM), and 322-342 (LASW…VGLG).

The protein belongs to the ZIP transporter (TC 2.A.5) family. In terms of tissue distribution, highly expressed in the testes and portions of the digestive system including the stomach, ileum and cecum. In contrast, expressed at very low levels in liver, duodenum, jejunum, and colon.

The protein localises to the cell membrane. The protein resides in the nucleus. It is found in the cytoplasm. It localises to the golgi apparatus. The catalysed reaction is Zn(2+)(in) = Zn(2+)(out). The enzyme catalyses Cu(2+)(in) = Cu(2+)(out). In terms of biological role, zinc importer that regulates cytosolic zinc concentration either via zinc influx from the extracellular compartment or efflux from intracellular organelles such as Golgi apparatus. May transport copper ions as well. The transport mechanism remains to be elucidated. This chain is Zinc transporter ZIP11 (Slc39a11), found in Mus musculus (Mouse).